Reading from the N-terminus, the 307-residue chain is MQTIPHVPVLYREVLEQFKNIKNGIVIDCTMGYGGHTSLILDANPNIKLIAIDQDQSAIDFSTKRLEPYGDRVVIKKGRFSTIIKEILKEYDISDIRGILADIGVSSLQLDKKERGFSFFSENLDMRMDEDAPLNANIVINEYSSHELQRVLLEYGELRNYKQIASFIVSNRPFYSAKELSDALRHLMPSGKKIHPATLLMQAIRIEVNNELGELESLLDTIQERKFLDTKVAIISFHSLEDRIVKNRFNEWRASCICPQEAMRCTCTNDNSLGNILTKKPIIAQMDEIQANPRSRSAKLRVFEMKK.

S-adenosyl-L-methionine-binding positions include 34 to 36 (GGH), aspartate 53, leucine 88, aspartate 102, and glutamine 109.

Belongs to the methyltransferase superfamily. RsmH family.

The protein resides in the cytoplasm. It carries out the reaction cytidine(1402) in 16S rRNA + S-adenosyl-L-methionine = N(4)-methylcytidine(1402) in 16S rRNA + S-adenosyl-L-homocysteine + H(+). Functionally, specifically methylates the N4 position of cytidine in position 1402 (C1402) of 16S rRNA. The protein is Ribosomal RNA small subunit methyltransferase H of Sulfurimonas denitrificans (strain ATCC 33889 / DSM 1251) (Thiomicrospira denitrificans (strain ATCC 33889 / DSM 1251)).